A 532-amino-acid polypeptide reads, in one-letter code: Zinc metalloproteinase nas-29 (532 aa).

The signal sequence occupies residues 1 to 22 (MISKNTSFCGFLILVLATCMSA). Residues asparagine 5, asparagine 27, asparagine 70, and asparagine 106 are each glycosylated (N-linked (GlcNAc...) asparagine). Residues 23 to 134 (QFVSNESIKL…NGESTDRTKR (112 aa)) constitute a propeptide that is removed on maturation. Positions 135-335 (QAYLDNNYPA…HIMNQHYQCQ (201 aa)) constitute a Peptidase M12A domain. 6 cysteine pairs are disulfide-bonded: cysteine 179/cysteine 334, cysteine 201/cysteine 222, cysteine 338/cysteine 358, cysteine 360/cysteine 369, cysteine 380/cysteine 408, and cysteine 435/cysteine 456. Position 230 (histidine 230) interacts with Zn(2+). Residue glutamate 231 is part of the active site. Histidine 234 and histidine 240 together coordinate Zn(2+). The EGF-like domain maps to 330-370 (QHYQCQEKCPTQAPCQNGGFTNSRNCKVCKCPTGFGGAYCQ). Positions 380 to 494 (CGGYLNAEET…VSFEYSFVST (115 aa)) constitute a CUB domain. Residue asparagine 503 is glycosylated (N-linked (GlcNAc...) asparagine).

The cofactor is Zn(2+).

The protein localises to the secreted. In terms of biological role, metalloprotease. The polypeptide is Zinc metalloproteinase nas-29 (nas-29) (Caenorhabditis elegans).